Here is a 359-residue protein sequence, read N- to C-terminus: MIINSNSSTIFSSIWLPVFFYVEPLDQQVIISILELMIYLVCIHLVNVSLHVALKIRLFHRNLYILALPMFGMWYELIIGKFITIAYRLKLLGLDFELGEHTAIWTNDPGKVLLVASLNGLELLIFGGFLQWHYMYSWIFGVLTVAVERVIASVLIENYESNTQNLMPAILLIISQFLSISMAFGLLFQKVGPLSAHFPWMISCPISVAAYVFVKKVNESFRREIKNPGRKRIFTLSQQFQVKENLRVLHLGTRLVFAVLSFIGICGCGIAALHYKIVPSYYCHLIENVLFLNPFLIGLTAMLSIPQWKEQFMKSFLTVRLFRNRRKPVHIVVEIEECAKKKNDVETNLYFKQLANSWI.

7 consecutive transmembrane segments (helical) span residues 29–49 (VIIS…VNVS), 65–85 (ILAL…FITI), 134–156 (YMYS…SVLI), 168–188 (PAIL…GLLF), 194–214 (LSAH…YVFV), 255–275 (LVFA…ALHY), and 285–305 (LIEN…MLSI).

This sequence belongs to the nematode receptor-like protein sre family.

It localises to the membrane. The sequence is that of Serpentine receptor class epsilon-33 (sre-33) from Caenorhabditis elegans.